Here is a 180-residue protein sequence, read N- to C-terminus: Large ribosomal subunit protein uL6c (180 aa).

It belongs to the universal ribosomal protein uL6 family. In terms of assembly, part of the 50S ribosomal subunit.

It localises to the plastid. Its subcellular location is the chloroplast. In terms of biological role, binds 23S rRNA. This is Large ribosomal subunit protein uL6c (rpl6) from Porphyra purpurea (Red seaweed).